The primary structure comprises 177 residues: Large ribosomal subunit protein uL6 (177 aa).

This sequence belongs to the universal ribosomal protein uL6 family. As to quaternary structure, part of the 50S ribosomal subunit.

Its function is as follows. This protein binds to the 23S rRNA, and is important in its secondary structure. It is located near the subunit interface in the base of the L7/L12 stalk, and near the tRNA binding site of the peptidyltransferase center. The protein is Large ribosomal subunit protein uL6 of Hydrogenovibrio crunogenus (strain DSM 25203 / XCL-2) (Thiomicrospira crunogena).